Consider the following 174-residue polypeptide: MKKQQRLVMRTAILLVLLAAIGYTIYTNFFTEKTAVAVGSTAPDFVLTDLKGHEHRLSDYRGKGVFLNFWGTWCKPCEREMPYMNELYPIYKKQGVEILAVNVGEPKLSVEKFAERFGLTFPIVIDRQDQVLNAYNVGPLPTTFLIDKNGEVKQIITGTMTKEDIERHLESIKP.

Residues 11–30 (TAILLVLLAAIGYTIYTNFF) traverse the membrane as a helical; Signal-anchor for type II membrane protein segment. Residues 36–174 (VAVGSTAPDF…IERHLESIKP (139 aa)) form the Thioredoxin domain. Cys-74 and Cys-77 are disulfide-bonded.

The protein belongs to the thioredoxin family. ResA subfamily.

Its subcellular location is the cell membrane. The protein operates within protein modification; cytochrome c assembly. Thiol-disulfide oxidoreductase which is required in disulfide reduction during c-type cytochrome synthesis. May accept reducing equivalents from CcdA, leading to breakage of disulfide bonds in apocytochrome c; following this reduction heme can be covalently attached. The polypeptide is Thiol-disulfide oxidoreductase ResA (Geobacillus kaustophilus (strain HTA426)).